The sequence spans 1260 residues: Ankyrin repeat and sterile alpha motif domain-containing protein 1B (1260 aa).

ANK repeat units lie at residues 2 to 31, 58 to 87, 91 to 120, 127 to 156, 160 to 189, 193 to 222, and 225 to 254; these read GKDQ…GGIL, SGYT…STNV, KGYF…SHSR, ENET…DPTI, KLET…NLMS, RKHT…DVSC, and EKGS…DANI. Positions 298 to 326 are disordered; that stretch reads HAQEDTAQETRLSSPAQSPSQKTKSETVT. Positions 306–326 are enriched in polar residues; the sequence is ETRLSSPAQSPSQKTKSETVT. Phosphoserine occurs at positions 310, 311, 315, 354, and 365. Disordered regions lie at residues 368–402, 491–513, and 556–642; these read ELGK…SCGP, PGTG…PSPD, and GCTS…EASL. Residues 372–385 show a composition bias toward polar residues; it reads NGSQSVRTSSTINL. Threonine 504 carries the post-translational modification Phosphothreonine. Phosphoserine is present on residues serine 508 and serine 511. The span at 556 to 575 shows a compositional bias: low complexity; that stretch reads GCTSFTSSPPVSPPTSSVET. Positions 576–588 are enriched in basic and acidic residues; that stretch reads TEIKNEGAEHTDD. The residue at position 739 (serine 739) is a Phosphoserine. Residues 754–778 form a disordered region; it reads VNWSKSSTAERSSKDNSERTPSFTS. Threonine 773 bears the Phosphothreonine mark. Position 775 is a phosphoserine (serine 775). 2 SAM domains span residues 810–876 and 884–949; these read CPVQ…LPKM and YHPT…RLHE. Tyrosine 901 carries the post-translational modification Phosphotyrosine. Residues 935-938 carry the Nuclear localization signal motif; it reads HRKR. The segment at 946 to 989 is disordered; it reads RLHEDPPQKPPRSITLREPSGNHTPPQLSPSLSQSTYTTGGSLD. The span at 969–984 shows a compositional bias: low complexity; sequence TPPQLSPSLSQSTYTT. A Phosphoserine modification is found at serine 974. Residue tyrosine 1007 is modified to Phosphotyrosine. One can recognise a PID domain in the interval 1056–1213; sequence IFQSCDYKAF…SFENKPSKPI (158 aa). The interval 1197–1217 is disordered; that stretch reads HSSTLPESFENKPSKPIPKPR.

In terms of assembly, interacts with EPHA8. Isoform 2 interacts with COIL. Isoform 3 interacts with DLG4. Post-translationally, nuclear translocation of isoform 3 requires an NMDAR-dependent proteolytic cleavage. A 35 kDa N-terminal form shuttles to the nucleus. Isoform 3 is brain specific and highly enriched in the postsynaptic densities (PSDs), especially in cortical, striatal and hippocampal PSDs.

It localises to the cytoplasm. It is found in the nucleus. The protein localises to the postsynaptic density. The protein resides in the cell projection. Its subcellular location is the dendritic spine. It localises to the cajal body. Isoform 2 may participate in the regulation of nucleoplasmic coilin protein interactions in neuronal and transformed cells. In terms of biological role, isoform 3 can regulate global protein synthesis by altering nucleolar numbers. The polypeptide is Ankyrin repeat and sterile alpha motif domain-containing protein 1B (Anks1b) (Rattus norvegicus (Rat)).